The sequence spans 289 residues: NFU1 iron-sulfur cluster scaffold homolog, mitochondrial (289 aa).

The N-terminal 56 residues, 1 to 56 (MAKLISYAKGGFLRNTRLTSRAVPQVYQHATSSRGFVHLTSSVAQSSAIHVSTPST), are a transit peptide targeting the mitochondrion. A nifU region spans residues 183–251 (IKELLDTRIR…IPEVESVEQV (69 aa)). Residues Cys-220 and Cys-223 each coordinate [4Fe-4S] cluster. The interval 267-289 (ERNLKQKDTSSTAPVGIGGGPAN) is disordered.

This sequence belongs to the NifU family.

It is found in the mitochondrion. Its function is as follows. Molecular scaffold for [Fe-S] cluster assembly of mitochondrial iron-sulfur proteins. The chain is NFU1 iron-sulfur cluster scaffold homolog, mitochondrial from Drosophila willistoni (Fruit fly).